The primary structure comprises 179 residues: UPF0303 protein YBR137W (179 aa).

It belongs to the UPF0303 family.

The protein localises to the cytoplasm. This Saccharomyces cerevisiae (strain ATCC 204508 / S288c) (Baker's yeast) protein is UPF0303 protein YBR137W.